The sequence spans 116 residues: Ribosome-binding factor A (116 aa).

This sequence belongs to the RbfA family. In terms of assembly, monomer. Binds 30S ribosomal subunits, but not 50S ribosomal subunits or 70S ribosomes.

It localises to the cytoplasm. Functionally, one of several proteins that assist in the late maturation steps of the functional core of the 30S ribosomal subunit. Associates with free 30S ribosomal subunits (but not with 30S subunits that are part of 70S ribosomes or polysomes). Required for efficient processing of 16S rRNA. May interact with the 5'-terminal helix region of 16S rRNA. This is Ribosome-binding factor A from Levilactobacillus brevis (strain ATCC 367 / BCRC 12310 / CIP 105137 / JCM 1170 / LMG 11437 / NCIMB 947 / NCTC 947) (Lactobacillus brevis).